Here is a 325-residue protein sequence, read N- to C-terminus: Hydroxymethylglutaryl-CoA lyase, mitochondrial (325 aa).

The N-terminal 27 residues, 1–27 (MATVKKVLPRRLVGLATLRAVSTSSVG), are a transit peptide targeting the mitochondrion. The Pyruvate carboxyltransferase domain occupies 33–300 (VKIVEVGPRD…HTGVNLQKLL (268 aa)). A substrate-binding site is contributed by Arg-41. Asp-42 lines the a divalent metal cation pocket. The residue at position 48 (Lys-48) is an N6-acetyllysine; alternate. Lys-48 is modified (N6-succinyllysine; alternate). The residue at position 111 (Lys-111) is an N6-acetyllysine. Residues Lys-137 and Lys-179 each carry the N6-acetyllysine; alternate modification. 2 positions are modified to N6-succinyllysine; alternate: Lys-137 and Lys-179. A divalent metal cation-binding residues include His-233 and His-235. Cys-266 is an active-site residue. Asn-275 contacts a divalent metal cation. The Microbody targeting signal motif lies at 323 to 325 (CKL). The residue at position 324 (Lys-324) is an N6-acetyllysine.

It belongs to the HMG-CoA lyase family. As to quaternary structure, homodimer; disulfide-linked. Can also form homotetramers.

The protein localises to the mitochondrion matrix. It is found in the peroxisome. It carries out the reaction (3S)-3-hydroxy-3-methylglutaryl-CoA = acetoacetate + acetyl-CoA. Its pathway is metabolic intermediate metabolism; (S)-3-hydroxy-3-methylglutaryl-CoA degradation; acetoacetate from (S)-3-hydroxy-3-methylglutaryl-CoA: step 1/1. Mitochondrial 3-hydroxy-3-methylglutaryl-CoA lyase that catalyzes a cation-dependent cleavage of (S)-3-hydroxy-3-methylglutaryl-CoA into acetyl-CoA and acetoacetate, a key step in ketogenesis. Terminal step in leucine catabolism. Ketone bodies (beta-hydroxybutyrate, acetoacetate and acetone) are essential as an alternative source of energy to glucose, as lipid precursors and as regulators of metabolism. This Bos taurus (Bovine) protein is Hydroxymethylglutaryl-CoA lyase, mitochondrial (HMGCL).